Consider the following 756-residue polypeptide: Pro-neuregulin-2, membrane-bound isoform (756 aa).

The propeptide occupies 1–19 (MRRDPAPGFSMLLFGVSLA). Over 20–315 (CYSPSLKSVQ…KEAEELYQKR (296 aa)) the chain is Extracellular. Residues Asn-55, Asn-186, and Asn-254 are each glycosylated (N-linked (GlcNAc...) asparagine). An Ig-like C2-type domain is found at 145–240 (PKLKKMKSQT…RGRLHVNSVS (96 aa)). 4 cysteine pairs are disulfide-bonded: Cys-165/Cys-219, Cys-253/Cys-267, Cys-261/Cys-278, and Cys-280/Cys-289. The EGF-like domain occupies 249–290 (HARKCNETAKSYCVNGGVCYYIEGINQLSCKCPVGYTGDRCQ). An N-linked (GlcNAc...) asparagine glycan is attached at Asn-296. A helical transmembrane segment spans residues 316–336 (VLTITGICVALLVVGIVCVVA). The Cytoplasmic portion of the chain corresponds to 337–756 (YCKTKKQRRQ…TRAKQDSGPL (420 aa)). Disordered stretches follow at residues 402–439 (TFSGSHSCSPSHHCSTATPTSSHRHESHTWSLERSESL), 557–578 (LLRHPAPPGPGPGSGPGADMQR), 608–694 (ASPF…DGAL), and 711–756 (LRSD…SGPL). The span at 404-416 (SGSHSCSPSHHCS) shows a compositional bias: low complexity. Basic and acidic residues predominate over residues 424–437 (HRHESHTWSLERSE). Over residues 654 to 682 (LNGLAAQRARAARDSLSLSSGSGCGSASA) the composition is skewed to low complexity.

It belongs to the neuregulin family. Interacts with ERBB3 and ERBB4. In terms of processing, proteolytic cleavage close to the plasma membrane on the external face leads to the release of the soluble growth factor form. Post-translationally, extensive glycosylation precedes the proteolytic cleavage. Highest expression in the brain, with lower levels in the lung. In the cerebellum, found in granule and Purkinje cells.

It is found in the cell membrane. The protein localises to the secreted. Direct ligand for ERBB3 and ERBB4 tyrosine kinase receptors. Concomitantly recruits ERBB1 and ERBB2 coreceptors, resulting in ligand-stimulated tyrosine phosphorylation and activation of the ERBB receptors. May also promote the heterodimerization with the EGF receptor. The protein is Pro-neuregulin-2, membrane-bound isoform (Nrg2) of Mus musculus (Mouse).